Consider the following 331-residue polypeptide: Sulfate/thiosulfate import ATP-binding protein CysA (331 aa).

One can recognise an ABC transporter domain in the interval 2–232 (ITVTNARKNY…PANEFVMSFL (231 aa)). Residue 34-41 (GPSGSGKS) participates in ATP binding.

Belongs to the ABC transporter superfamily. Sulfate/tungstate importer (TC 3.A.1.6) family. In terms of assembly, the complex is composed of two ATP-binding proteins (CysA), two transmembrane proteins (CysT and CysW) and a solute-binding protein (CysP).

It is found in the cell membrane. It catalyses the reaction sulfate(out) + ATP + H2O = sulfate(in) + ADP + phosphate + H(+). The catalysed reaction is thiosulfate(out) + ATP + H2O = thiosulfate(in) + ADP + phosphate + H(+). Its function is as follows. Part of the ABC transporter complex CysAWTP involved in sulfate/thiosulfate import. Responsible for energy coupling to the transport system. This chain is Sulfate/thiosulfate import ATP-binding protein CysA, found in Nocardia farcinica (strain IFM 10152).